An 85-amino-acid chain; its full sequence is uncharacterized protein (85 aa).

The next 3 helical transmembrane spans lie at L4–A24, S27–E47, and R61–A81.

The protein resides in the cell membrane. This is an uncharacterized protein from Pseudomonas aeruginosa (strain ATCC 15692 / DSM 22644 / CIP 104116 / JCM 14847 / LMG 12228 / 1C / PRS 101 / PAO1).